We begin with the raw amino-acid sequence, 372 residues long: DNA replication and repair protein RecF (372 aa).

30–37 (GENAQGKT) lines the ATP pocket.

This sequence belongs to the RecF family.

It localises to the cytoplasm. Functionally, the RecF protein is involved in DNA metabolism; it is required for DNA replication and normal SOS inducibility. RecF binds preferentially to single-stranded, linear DNA. It also seems to bind ATP. This Exiguobacterium sp. (strain ATCC BAA-1283 / AT1b) protein is DNA replication and repair protein RecF.